Consider the following 235-residue polypeptide: N-alpha-acetyltransferase 10 (235 aa).

An N-acetylmethionine modification is found at M1. An interaction with NAA15 region spans residues 1-58 (MNIRNARPEDLMNMQHCNLLCLPENYQMKYYFYHGLSWPQLSYIAEDENGKIVGYVLA). In terms of domain architecture, N-acetyltransferase spans 1 to 152 (MNIRNARPED…DAYAMKRDLT (152 aa)). K136 carries the post-translational modification N6-acetyllysine; by autocatalysis. The tract at residues 178 to 235 (NKVESKGNSPPSSGEACREEKGLAAEDSGGDSKDLSEVSETTESTDVKDSSEASDSAS) is disordered. A phosphoserine mark is found at S182, S186, and S205. Residues 193–213 (ACREEKGLAAEDSGGDSKDLS) are compositionally biased toward basic and acidic residues. Residue S209 is modified to Phosphoserine; by IKKB. Phosphoserine is present on residues S213 and S216.

Belongs to the acetyltransferase family. ARD1 subfamily. In terms of assembly, component of the N-terminal acetyltransferase A complex (also called the NatA complex) composed of NAA10 and NAA15. Within the complex interacts with NAA15. Component of the N-terminal acetyltransferase A (NatA)/HYPK complex at least composed of NAA10, NAA15 and HYPK, which has N-terminal acetyltransferase activity. In complex with NAA15, interacts with HYPK. Component of the N-terminal acetyltransferase E (NatE) complex at least composed of NAA10, NAA15 and NAA50. Within the complex interacts with NAA15; the interaction is required for binding to NAAT50. Interacts with NAAT50. The interaction of the NatA complex with NAA50 reduces the acetylation activity of the NatA complex. Component of the N-terminal acetyltransferase E (NatE)/HYPK complex at least composed of NAA10, NAA15, NAA50 and HYPK. In complex with NAA15, interacts with HYPK; the interaction with HYPK reduces the capacity of the NatA complex to interact with NAA50. Interacts with HIF1A (via its ODD domain); the interaction increases HIF1A protein stability during normoxia, an down-regulates it when induced by hypoxia. Interacts with the ribosome. Binds to MYLK. Interacts with NAA16. Interacts (via its C-terminal domain) with TSC2, leading to its acetylation. Interacts with IKBKB. Interacts with HSPA1A and HSPA1B leading to its acetylation. In terms of processing, cleaved by caspases during apoptosis. Post-translationally, phosphorylation by IKBKB/IKKB at Ser-209 promotes its proteasome-mediated degradation. Autoacetylated at Lys-136 which stimulates its catalytic activity. Ubiquitous.

The protein resides in the cytoplasm. The protein localises to the nucleus. The enzyme catalyses N-terminal glycyl-[protein] + acetyl-CoA = N-terminal N(alpha)-acetylglycyl-[protein] + CoA + H(+). The catalysed reaction is N-terminal L-alanyl-[protein] + acetyl-CoA = N-terminal N(alpha)-acetyl-L-alanyl-[protein] + CoA + H(+). It carries out the reaction N-terminal L-seryl-[protein] + acetyl-CoA = N-terminal N(alpha)-acetyl-L-seryl-[protein] + CoA + H(+). It catalyses the reaction N-terminal L-valyl-[protein] + acetyl-CoA = N-terminal N(alpha)-acetyl-L-valyl-[protein] + CoA + H(+). The enzyme catalyses N-terminal L-cysteinyl-[protein] + acetyl-CoA = N-terminal N(alpha)-acetyl-L-cysteinyl-[protein] + CoA + H(+). The catalysed reaction is N-terminal L-threonyl-[protein] + acetyl-CoA = N-terminal N(alpha)-acetyl-L-threonyl-[protein] + CoA + H(+). In terms of biological role, catalytic subunit of N-terminal acetyltransferase complexes which display alpha (N-terminal) acetyltransferase activity. Acetylates amino termini that are devoid of initiator methionine. The alpha (N-terminal) acetyltransferase activity may be important for vascular, hematopoietic and neuronal growth and development. Without NAA15, displays epsilon (internal) acetyltransferase activity towards HIF1A, thereby promoting its degradation. Represses MYLK kinase activity by acetylation, and thus represses tumor cell migration. Acetylates, and stabilizes TSC2, thereby repressing mTOR activity and suppressing cancer development. Acetylates HSPA1A and HSPA1B at 'Lys-77' which enhances its chaperone activity and leads to preferential binding to co-chaperone HOPX. Acetylates HIST1H4A. Acts as a negative regulator of sister chromatid cohesion during mitosis. In Homo sapiens (Human), this protein is N-alpha-acetyltransferase 10 (NAA10).